The sequence spans 391 residues: S-adenosylmethionine synthase (391 aa).

The interval 1–20 is disordered; that stretch reads MPRSDYLFTSESVSEGHPDK. Histidine 17 serves as a coordination point for ATP. Aspartate 19 lines the Mg(2+) pocket. Residue glutamate 45 participates in K(+) binding. Residues glutamate 58 and glutamine 102 each contribute to the L-methionine site. Residues 102–112 form a flexible loop region; the sequence is QSADIAQGVDA. ATP-binding positions include 169 to 171, 235 to 236, aspartate 244, 250 to 251, alanine 267, and lysine 271; these read DAK, KF, and RK. Residue aspartate 244 coordinates L-methionine. Lysine 275 is an L-methionine binding site.

It belongs to the AdoMet synthase family. As to quaternary structure, homotetramer; dimer of dimers. It depends on Mg(2+) as a cofactor. Requires K(+) as cofactor.

The protein resides in the cytoplasm. It carries out the reaction L-methionine + ATP + H2O = S-adenosyl-L-methionine + phosphate + diphosphate. Its pathway is amino-acid biosynthesis; S-adenosyl-L-methionine biosynthesis; S-adenosyl-L-methionine from L-methionine: step 1/1. In terms of biological role, catalyzes the formation of S-adenosylmethionine (AdoMet) from methionine and ATP. The overall synthetic reaction is composed of two sequential steps, AdoMet formation and the subsequent tripolyphosphate hydrolysis which occurs prior to release of AdoMet from the enzyme. This chain is S-adenosylmethionine synthase, found in Methylorubrum extorquens (strain CM4 / NCIMB 13688) (Methylobacterium extorquens).